Reading from the N-terminus, the 284-residue chain is Bifunctional protein FolD (284 aa).

Residues 165–167 and Ser190 contribute to the NADP(+) site; that span reads GRS.

Belongs to the tetrahydrofolate dehydrogenase/cyclohydrolase family. Homodimer.

It catalyses the reaction (6R)-5,10-methylene-5,6,7,8-tetrahydrofolate + NADP(+) = (6R)-5,10-methenyltetrahydrofolate + NADPH. It carries out the reaction (6R)-5,10-methenyltetrahydrofolate + H2O = (6R)-10-formyltetrahydrofolate + H(+). It functions in the pathway one-carbon metabolism; tetrahydrofolate interconversion. In terms of biological role, catalyzes the oxidation of 5,10-methylenetetrahydrofolate to 5,10-methenyltetrahydrofolate and then the hydrolysis of 5,10-methenyltetrahydrofolate to 10-formyltetrahydrofolate. This is Bifunctional protein FolD from Streptococcus uberis (strain ATCC BAA-854 / 0140J).